Consider the following 364-residue polypeptide: MITAEKKKKNKFLPNFDKQSIYSLRFDEMQNWLVEQGQQKFRAKQIFEWLYQKRVDSIDEMTNLSKDLRQLLKDNFTVTTLTTVVKQESKDGTIKFLYELQDGYTIETVLMRHDYGNSVCVTTQVGCRIGCTFCASTLGGLKRNLEAGEIVSQVLTVQKALDATEERVSQIVIMGIGEPFENYDEMMDFLRIVNDDNSLNIGARHITVSTSGIIPRIYDFADEDIQINFAVSLHAAKDEVRSRLMPINRAYNVEKLIEAIQYYQEKTNRRVTFEYGLFGGVNDQLEHARELAHLIKGLNCHVNLIPVNHVPERNYVKTAKNDIFKFEKELKRLGINATIRREQGSDIDAACGQLRAKERQVETR.

Glutamate 107 serves as the catalytic Proton acceptor. The Radical SAM core domain occupies histidine 113–aspartate 346. Cysteines 120 and 351 form a disulfide. [4Fe-4S] cluster-binding residues include cysteine 127, cysteine 131, and cysteine 134. Residues glycine 177–glutamate 178, serine 209, serine 232–histidine 234, and asparagine 308 contribute to the S-adenosyl-L-methionine site. Cysteine 351 serves as the catalytic S-methylcysteine intermediate.

Belongs to the radical SAM superfamily. RlmN family. The cofactor is [4Fe-4S] cluster.

The protein resides in the cytoplasm. It carries out the reaction adenosine(2503) in 23S rRNA + 2 reduced [2Fe-2S]-[ferredoxin] + 2 S-adenosyl-L-methionine = 2-methyladenosine(2503) in 23S rRNA + 5'-deoxyadenosine + L-methionine + 2 oxidized [2Fe-2S]-[ferredoxin] + S-adenosyl-L-homocysteine. The catalysed reaction is adenosine(37) in tRNA + 2 reduced [2Fe-2S]-[ferredoxin] + 2 S-adenosyl-L-methionine = 2-methyladenosine(37) in tRNA + 5'-deoxyadenosine + L-methionine + 2 oxidized [2Fe-2S]-[ferredoxin] + S-adenosyl-L-homocysteine. Functionally, specifically methylates position 2 of adenine 2503 in 23S rRNA and position 2 of adenine 37 in tRNAs. Confers resistance to some classes of antibiotics. This is Probable dual-specificity RNA methyltransferase RlmN from Staphylococcus aureus (strain MW2).